The primary structure comprises 456 residues: Putative F-box/FBD/LRR-repeat protein At1g66300 (456 aa).

The segment at 1-23 (MDEDGEKRVRTKRLCSPESSDKK) is disordered. In terms of domain architecture, F-box spans 28–74 (VDWVRDLPESLICHVLLNLSTKDVIKNCVLSTKWRYLWRYVPGLDLD). LRR repeat units follow at residues 136 to 163 (HLDL…KLCG), 185 to 210 (VKFA…TLCR), 234 to 260 (PNTM…TLSH), and 347 to 372 (FYED…VVGS). Residues 377-429 (MERTSIISGHRCLLSSLEYVEIETPLTGEVFEMKLVSYLLENSPILKKLTIHL) form the FBD domain.

The protein is Putative F-box/FBD/LRR-repeat protein At1g66300 of Arabidopsis thaliana (Mouse-ear cress).